A 550-amino-acid chain; its full sequence is C-type lectin domain family 4 member F (550 aa).

Residues 1–42 lie on the Cytoplasmic side of the membrane; sequence MKEAELNRDVAKFCTDNQCVILQPQGLGPKSAAPMAPRTLRH. Residues 43-69 form a helical; Signal-anchor for type II membrane protein membrane-spanning segment; it reads VQAIVALVVVTVFFSLLALFVVVLQPW. Topologically, residues 70–550 are extracellular; sequence RQKQNEDHPV…DWSVARTDQS (481 aa). N-linked (GlcNAc...) asparagine glycans are attached at residues asparagine 87, asparagine 93, asparagine 115, asparagine 132, asparagine 209, and asparagine 255. Residues 438–538 form the C-type lectin domain; sequence NFCVSQGAHL…GTAYNWVCKK (101 aa). Intrachain disulfides connect cysteine 440/cysteine 536 and cysteine 516/cysteine 528.

As to expression, kupffer cells.

The protein localises to the membrane. Receptor with an affinity for galactose and fucose. Could be involved in endocytosis. The sequence is that of C-type lectin domain family 4 member F (Clec4f) from Rattus norvegicus (Rat).